A 453-amino-acid polypeptide reads, in one-letter code: Bifunctional protein GlmU (453 aa).

The segment at 1 to 225 is pyrophosphorylase; sequence MHAHVILAAG…AEEALGVNTR (225 aa). Residues 7-10, K21, Q72, and 77-78 each bind UDP-N-acetyl-alpha-D-glucosamine; these read LAAG and GT. D102 contributes to the Mg(2+) binding site. 4 residues coordinate UDP-N-acetyl-alpha-D-glucosamine: G138, E152, N167, and N223. N223 is a Mg(2+) binding site. The interval 226-246 is linker; the sequence is EELARVEGVLLRRLRAEWMGK. Positions 247–453 are N-acetyltransferase; sequence GVRMILPETI…GYALRKLGEG (207 aa). UDP-N-acetyl-alpha-D-glucosamine-binding residues include R329 and K347. Residue H359 is the Proton acceptor of the active site. UDP-N-acetyl-alpha-D-glucosamine is bound by residues Y362 and N373. Residues A376, 382-383, S401, A419, and R436 contribute to the acetyl-CoA site; that span reads NY.

This sequence in the N-terminal section; belongs to the N-acetylglucosamine-1-phosphate uridyltransferase family. It in the C-terminal section; belongs to the transferase hexapeptide repeat family. In terms of assembly, homotrimer. Mg(2+) serves as cofactor.

The protein localises to the cytoplasm. It carries out the reaction alpha-D-glucosamine 1-phosphate + acetyl-CoA = N-acetyl-alpha-D-glucosamine 1-phosphate + CoA + H(+). It catalyses the reaction N-acetyl-alpha-D-glucosamine 1-phosphate + UTP + H(+) = UDP-N-acetyl-alpha-D-glucosamine + diphosphate. Its pathway is nucleotide-sugar biosynthesis; UDP-N-acetyl-alpha-D-glucosamine biosynthesis; N-acetyl-alpha-D-glucosamine 1-phosphate from alpha-D-glucosamine 6-phosphate (route II): step 2/2. It participates in nucleotide-sugar biosynthesis; UDP-N-acetyl-alpha-D-glucosamine biosynthesis; UDP-N-acetyl-alpha-D-glucosamine from N-acetyl-alpha-D-glucosamine 1-phosphate: step 1/1. It functions in the pathway bacterial outer membrane biogenesis; LPS lipid A biosynthesis. Catalyzes the last two sequential reactions in the de novo biosynthetic pathway for UDP-N-acetylglucosamine (UDP-GlcNAc). The C-terminal domain catalyzes the transfer of acetyl group from acetyl coenzyme A to glucosamine-1-phosphate (GlcN-1-P) to produce N-acetylglucosamine-1-phosphate (GlcNAc-1-P), which is converted into UDP-GlcNAc by the transfer of uridine 5-monophosphate (from uridine 5-triphosphate), a reaction catalyzed by the N-terminal domain. The sequence is that of Bifunctional protein GlmU from Thermus thermophilus (strain ATCC BAA-163 / DSM 7039 / HB27).